We begin with the raw amino-acid sequence, 710 residues long: Polyribonucleotide nucleotidyltransferase (710 aa).

2 residues coordinate Mg(2+): Asp-488 and Asp-494. The 60-residue stretch at 555–614 folds into the KH domain; sequence PRIETITIPTDKIRDVIGSGGKVIREIVETTGAKVDVNDDGVIKVSSSDGASIKAALDWI. In terms of domain architecture, S1 motif spans 624 to 692; that stretch reads GQIYKGKVVK…DRGKVRLSMK (69 aa).

This sequence belongs to the polyribonucleotide nucleotidyltransferase family. Mg(2+) serves as cofactor.

The protein localises to the cytoplasm. It catalyses the reaction RNA(n+1) + phosphate = RNA(n) + a ribonucleoside 5'-diphosphate. Functionally, involved in mRNA degradation. Catalyzes the phosphorolysis of single-stranded polyribonucleotides processively in the 3'- to 5'-direction. This is Polyribonucleotide nucleotidyltransferase from Maricaulis maris (strain MCS10) (Caulobacter maris).